The sequence spans 339 residues: DNA-directed RNA polymerase subunit alpha (339 aa).

Positions 1 to 233 are alpha N-terminal domain (alpha-NTD); it reads MVREEVAGST…DLFLPFLHAE (233 aa). Positions 264 to 339 are alpha C-terminal domain (alpha-CTD); that stretch reads KKGIPLNCIF…IDLLKNKLSF (76 aa).

The protein belongs to the RNA polymerase alpha chain family. In plastids the minimal PEP RNA polymerase catalytic core is composed of four subunits: alpha, beta, beta', and beta''. When a (nuclear-encoded) sigma factor is associated with the core the holoenzyme is formed, which can initiate transcription.

It is found in the plastid. The protein resides in the chloroplast. It catalyses the reaction RNA(n) + a ribonucleoside 5'-triphosphate = RNA(n+1) + diphosphate. Functionally, DNA-dependent RNA polymerase catalyzes the transcription of DNA into RNA using the four ribonucleoside triphosphates as substrates. The polypeptide is DNA-directed RNA polymerase subunit alpha (Aegilops uniaristata (Goatgrass)).